A 113-amino-acid chain; its full sequence is Cell division protein FtsB (113 aa).

Over 1–3 (MRL) the chain is Cytoplasmic. Residues 4-21 (ISLLLFVLLLAIQYPLWL) traverse the membrane as a helical segment. Residues 22 to 113 (GKGGWLRVWD…PNSVAGRGGH (92 aa)) lie on the Periplasmic side of the membrane. The stretch at 34–64 (RQVNEQTVHNQALKLRNAKLEGEVKDLQDGT) forms a coiled coil. Residues 93–113 (KVSATPPLPPPPNSVAGRGGH) form a disordered region.

Belongs to the FtsB family. Part of a complex composed of FtsB, FtsL and FtsQ.

Its subcellular location is the cell inner membrane. Essential cell division protein. May link together the upstream cell division proteins, which are predominantly cytoplasmic, with the downstream cell division proteins, which are predominantly periplasmic. This chain is Cell division protein FtsB, found in Cupriavidus metallidurans (strain ATCC 43123 / DSM 2839 / NBRC 102507 / CH34) (Ralstonia metallidurans).